A 398-amino-acid chain; its full sequence is 1-deoxy-D-xylulose 5-phosphate reductoisomerase (398 aa).

T10, G11, S12, I13, N38, and N124 together coordinate NADPH. K125 contributes to the 1-deoxy-D-xylulose 5-phosphate binding site. E126 is a binding site for NADPH. D150 lines the Mn(2+) pocket. Residues S151, E152, S176, and H199 each contribute to the 1-deoxy-D-xylulose 5-phosphate site. E152 provides a ligand contact to Mn(2+). G205 is a binding site for NADPH. The 1-deoxy-D-xylulose 5-phosphate site is built by S212, N217, K218, and E221. E221 contacts Mn(2+).

It belongs to the DXR family. The cofactor is Mg(2+). It depends on Mn(2+) as a cofactor.

It catalyses the reaction 2-C-methyl-D-erythritol 4-phosphate + NADP(+) = 1-deoxy-D-xylulose 5-phosphate + NADPH + H(+). It participates in isoprenoid biosynthesis; isopentenyl diphosphate biosynthesis via DXP pathway; isopentenyl diphosphate from 1-deoxy-D-xylulose 5-phosphate: step 1/6. Functionally, catalyzes the NADPH-dependent rearrangement and reduction of 1-deoxy-D-xylulose-5-phosphate (DXP) to 2-C-methyl-D-erythritol 4-phosphate (MEP). This Crocosphaera subtropica (strain ATCC 51142 / BH68) (Cyanothece sp. (strain ATCC 51142)) protein is 1-deoxy-D-xylulose 5-phosphate reductoisomerase.